Reading from the N-terminus, the 555-residue chain is Urocanate hydratase (555 aa).

NAD(+) is bound by residues 53–54 (GG), glutamine 131, 177–179 (GMG), glutamate 197, arginine 202, 243–244 (NA), 264–268 (QTSAH), 274–275 (YL), and tyrosine 323. Cysteine 411 is a catalytic residue. Residue glycine 493 coordinates NAD(+).

Belongs to the urocanase family. The cofactor is NAD(+).

It localises to the cytoplasm. It carries out the reaction 4-imidazolone-5-propanoate = trans-urocanate + H2O. It participates in amino-acid degradation; L-histidine degradation into L-glutamate; N-formimidoyl-L-glutamate from L-histidine: step 2/3. In terms of biological role, catalyzes the conversion of urocanate to 4-imidazolone-5-propionate. The protein is Urocanate hydratase of Maricaulis maris (strain MCS10) (Caulobacter maris).